A 207-amino-acid polypeptide reads, in one-letter code: Urease accessory protein UreG (207 aa).

Residue 13-20 participates in GTP binding; it reads GPVGSGKT.

It belongs to the SIMIBI class G3E GTPase family. UreG subfamily. Homodimer. UreD, UreF and UreG form a complex that acts as a GTP-hydrolysis-dependent molecular chaperone, activating the urease apoprotein by helping to assemble the nickel containing metallocenter of UreC. The UreE protein probably delivers the nickel.

Its subcellular location is the cytoplasm. Its function is as follows. Facilitates the functional incorporation of the urease nickel metallocenter. This process requires GTP hydrolysis, probably effectuated by UreG. This chain is Urease accessory protein UreG, found in Azoarcus sp. (strain BH72).